The sequence spans 174 residues: Gamma-crystallin A (174 aa).

Beta/gamma crystallin 'Greek key' domains are found at residues 2–40 (GKITFYEDRDFQGRCYNCISDCPNLRVYFSRCNSIRVDS) and 41–83 (GCWM…RIIP). A connecting peptide region spans residues 84 to 87 (HTSS). 2 Beta/gamma crystallin 'Greek key' domains span residues 88–128 (HKLR…HVLE) and 129–171 (GCWV…RRVT).

The protein belongs to the beta/gamma-crystallin family. As to quaternary structure, monomer.

Functionally, crystallins are the dominant structural components of the vertebrate eye lens. The chain is Gamma-crystallin A (CRYGA) from Homo sapiens (Human).